A 178-amino-acid chain; its full sequence is Large ribosomal subunit protein uL6 (178 aa).

The protein belongs to the universal ribosomal protein uL6 family. In terms of assembly, part of the 50S ribosomal subunit.

Functionally, this protein binds to the 23S rRNA, and is important in its secondary structure. It is located near the subunit interface in the base of the L7/L12 stalk, and near the tRNA binding site of the peptidyltransferase center. The sequence is that of Large ribosomal subunit protein uL6 from Bacillus licheniformis (strain ATCC 14580 / DSM 13 / JCM 2505 / CCUG 7422 / NBRC 12200 / NCIMB 9375 / NCTC 10341 / NRRL NRS-1264 / Gibson 46).